The following is a 511-amino-acid chain: MKQRALVSVSDKTGVVEFVKGLLEQGIEVISTGGTKKLLEENGLQVIGISEVTGFPEIMDGRVKTLHPNIHGGLLAVRDNETHVAQMNELGIEPIDFVVVNLYPFKETIAKPDVTFADAIENIDIGGPTMIRSAAKNHKFVSVIVDPVDYDVVLAELEENGEVKEETKRKLAAKVFRHTAAYDALISNYLTEQMGEESPETLTVTFEKKQDLRYGENPHQKATFYKAPFAATSSVAYAEQLHGKELSYNNINDADAALSIVKEFTEPAVVAVKHMNPCGVGVGTDIHEAYTRAYEADPVSIFGGIIAANREIDKSTAEKLHEIFLEIIIAPSFSKEALEVLQSKKNLRLLTVNIEKSTSASKKLTSVQGGLLVQEEDTLSLDESTISIPTKREPSEQEWKDLKLAWKVVKHVKSNAIVLAKDDMTIGVGAGQMNRVGSAKIAITQAGEKAQGSALASDAFFPMPDTLEEAAKAGITAIIQPGGSIRDEDSIKVADTYGIAMVFTGVRHFKH.

One can recognise an MGS-like domain in the interval 1-145 (MKQRALVSVS…KNHKFVSVIV (145 aa)).

The protein belongs to the PurH family.

The enzyme catalyses (6R)-10-formyltetrahydrofolate + 5-amino-1-(5-phospho-beta-D-ribosyl)imidazole-4-carboxamide = 5-formamido-1-(5-phospho-D-ribosyl)imidazole-4-carboxamide + (6S)-5,6,7,8-tetrahydrofolate. It catalyses the reaction IMP + H2O = 5-formamido-1-(5-phospho-D-ribosyl)imidazole-4-carboxamide. It functions in the pathway purine metabolism; IMP biosynthesis via de novo pathway; 5-formamido-1-(5-phospho-D-ribosyl)imidazole-4-carboxamide from 5-amino-1-(5-phospho-D-ribosyl)imidazole-4-carboxamide (10-formyl THF route): step 1/1. The protein operates within purine metabolism; IMP biosynthesis via de novo pathway; IMP from 5-formamido-1-(5-phospho-D-ribosyl)imidazole-4-carboxamide: step 1/1. The protein is Bifunctional purine biosynthesis protein PurH of Bacillus cereus (strain AH187).